Here is a 69-residue protein sequence, read N- to C-terminus: Putative membrane protein insertion efficiency factor (69 aa).

Belongs to the UPF0161 family.

The protein resides in the cell inner membrane. Its function is as follows. Could be involved in insertion of integral membrane proteins into the membrane. The polypeptide is Putative membrane protein insertion efficiency factor (Chromobacterium violaceum (strain ATCC 12472 / DSM 30191 / JCM 1249 / CCUG 213 / NBRC 12614 / NCIMB 9131 / NCTC 9757 / MK)).